A 286-amino-acid chain; its full sequence is MAGAKEIRSKIASIKSTQKITSAMEKVAVSKMRKAQMRMAASRPYAERIRQVIGHLANANPEYRHPFMIERPVKRAGYIVVSSDRGLCGGLNTNLFKALVKDMNENREQGVEIDLCVIGSKGATFFRIFGGNVVAAISHLGEEPSINDLIGSVKVMLDAYLDGRIDRLSVVSNKFINTMTQKPTVEQLVPLVATPDQDLKHHWDYLYEPDAKELLDGLMVRYVESQVYQAVVENNAAEQAARMIAMKNATDNAGDLISELQLIYNKARQAAITQEISEIVGGAAAV.

The protein belongs to the ATPase gamma chain family. In terms of assembly, F-type ATPases have 2 components, CF(1) - the catalytic core - and CF(0) - the membrane proton channel. CF(1) has five subunits: alpha(3), beta(3), gamma(1), delta(1), epsilon(1). CF(0) has three main subunits: a, b and c.

The protein localises to the cell inner membrane. Functionally, produces ATP from ADP in the presence of a proton gradient across the membrane. The gamma chain is believed to be important in regulating ATPase activity and the flow of protons through the CF(0) complex. The chain is ATP synthase gamma chain from Pseudomonas entomophila (strain L48).